The sequence spans 231 residues: Putative cobalt transport protein CbiM 1 (231 aa).

Helical transmembrane passes span 8–28 (LPLQ…AYGI), 41–61 (TLPL…LKMP), 74–94 (GLGA…IVLV), 97–117 (ALFL…SMGI), 138–158 (IVNV…ITSI), and 175–195 (FITF…IEGI).

This sequence belongs to the CbiM family. In terms of assembly, forms an energy-coupling factor (ECF) transporter complex composed of an ATP-binding protein (A component, CbiO), a transmembrane protein (T component, CbiQ) and 2 possible substrate-capture proteins (S components, CbiM and CbiN) of unknown stoichimetry.

Its subcellular location is the cell membrane. It participates in cofactor biosynthesis; adenosylcobalamin biosynthesis. In terms of biological role, part of the energy-coupling factor (ECF) transporter complex CbiMNOQ involved in cobalt import. The sequence is that of Putative cobalt transport protein CbiM 1 from Methanosphaerula palustris (strain ATCC BAA-1556 / DSM 19958 / E1-9c).